A 450-amino-acid polypeptide reads, in one-letter code: Phosphoglucosamine mutase (450 aa).

S102 (phosphoserine intermediate) is an active-site residue. The Mg(2+) site is built by S102, D244, D246, and D248. At S102 the chain carries Phosphoserine.

Belongs to the phosphohexose mutase family. Requires Mg(2+) as cofactor. In terms of processing, activated by phosphorylation.

It carries out the reaction alpha-D-glucosamine 1-phosphate = D-glucosamine 6-phosphate. Catalyzes the conversion of glucosamine-6-phosphate to glucosamine-1-phosphate. This is Phosphoglucosamine mutase from Bartonella bacilliformis (strain ATCC 35685 / KC583 / Herrer 020/F12,63).